The sequence spans 472 residues: Probable endopolygalacturonase D (472 aa).

Positions 1-16 are cleaved as a signal peptide; the sequence is MKRGALLVPFVPLALA. Asn24 carries N-linked (GlcNAc...) asparagine glycosylation. A disulfide bridge connects residues Cys129 and Cys144. 3 PbH1 repeats span residues 236-258, 259-297, and 298-319; these read MYYSRIENLNIQNWPVHCFDIEH, TENLIISGITLDNSAGDAPNSASGSKPAAHNSDGFDIKS, and STNLTLQNSWVHNQDDCVAVSS. An N-linked (GlcNAc...) asparagine glycan is attached at Asn300. Asp312 acts as the Proton donor in catalysis. Cysteines 314 and 330 form a disulfide. His334 is an active-site residue. PbH1 repeat units follow at residues 349–370, 378–400, 412–433, and 444–467; these read VDGVTFSNSQVINSSNGCRIKS, VSNIRYENITVSGITDYGIDIQQ, TNGVKIENITFVDVTGTMSDGK, and CSNFVFENVGITGGSGDSCNYPTD. Residues Asn361, Asn385, and Asn419 are each glycosylated (N-linked (GlcNAc...) asparagine). 2 cysteine pairs are disulfide-bonded: Cys439/Cys444 and Cys462/Cys469.

Belongs to the glycosyl hydrolase 28 family.

Its subcellular location is the secreted. It carries out the reaction (1,4-alpha-D-galacturonosyl)n+m + H2O = (1,4-alpha-D-galacturonosyl)n + (1,4-alpha-D-galacturonosyl)m.. Its function is as follows. Involved in maceration and soft-rotting of plant tissue. Hydrolyzes the 1,4-alpha glycosidic bonds of de-esterified pectate in the smooth region of the plant cell wall. The chain is Probable endopolygalacturonase D (pgaD) from Neosartorya fischeri (strain ATCC 1020 / DSM 3700 / CBS 544.65 / FGSC A1164 / JCM 1740 / NRRL 181 / WB 181) (Aspergillus fischerianus).